The following is a 311-amino-acid chain: Methionyl-tRNA formyltransferase (311 aa).

A (6S)-5,6,7,8-tetrahydrofolate-binding site is contributed by 112-115 (SLLP).

This sequence belongs to the Fmt family.

It carries out the reaction L-methionyl-tRNA(fMet) + (6R)-10-formyltetrahydrofolate = N-formyl-L-methionyl-tRNA(fMet) + (6S)-5,6,7,8-tetrahydrofolate + H(+). Attaches a formyl group to the free amino group of methionyl-tRNA(fMet). The formyl group appears to play a dual role in the initiator identity of N-formylmethionyl-tRNA by promoting its recognition by IF2 and preventing the misappropriation of this tRNA by the elongation apparatus. The sequence is that of Methionyl-tRNA formyltransferase from Chelativorans sp. (strain BNC1).